We begin with the raw amino-acid sequence, 130 residues long: Large ribosomal subunit protein bL17 (130 aa).

It belongs to the bacterial ribosomal protein bL17 family. In terms of assembly, part of the 50S ribosomal subunit. Contacts protein L32.

This Buchnera aphidicola subsp. Acyrthosiphon pisum (strain 5A) protein is Large ribosomal subunit protein bL17.